The chain runs to 378 residues: Sperm microtubule associated protein 2 (378 aa).

2 disordered regions span residues 1-35 (MGEL…SDGS) and 47-79 (WLQS…LPEV). Positions 47 to 56 (WLQSSQATTE) are enriched in polar residues. Positions 61 to 77 (DPEEEIPPEEMVGEELP) are enriched in acidic residues. THEG repeat units lie at residues 113–132 (AKCR…PKFN), 179–198 (TITV…PKRF), 217–236 (STLE…PKIR), 253–272 (AAQM…PRAP), 285–304 (PKPY…PKAL), 321–340 (VTKN…PKIR), and 355–374 (ASLV…PKHI). A Phosphoserine modification is found at Ser-290.

As to quaternary structure, interacts with CCT5.

It is found in the nucleus. In terms of biological role, may be involved (but not essential) in spermatogenesis. The sequence is that of Sperm microtubule associated protein 2 from Rattus norvegicus (Rat).